The chain runs to 431 residues: Glutamyl-tRNA(Gln) amidotransferase subunit A (431 aa).

Active-site charge relay system residues include Lys-55 and Ser-130. Ser-154 serves as the catalytic Acyl-ester intermediate.

Belongs to the amidase family. GatA subfamily. Heterotrimer of A, B and C subunits.

The catalysed reaction is L-glutamyl-tRNA(Gln) + L-glutamine + ATP + H2O = L-glutaminyl-tRNA(Gln) + L-glutamate + ADP + phosphate + H(+). In terms of biological role, allows the formation of correctly charged Gln-tRNA(Gln) through the transamidation of misacylated Glu-tRNA(Gln) in organisms which lack glutaminyl-tRNA synthetase. The reaction takes place in the presence of glutamine and ATP through an activated gamma-phospho-Glu-tRNA(Gln). The sequence is that of Glutamyl-tRNA(Gln) amidotransferase subunit A from Methanococcus maripaludis (strain C5 / ATCC BAA-1333).